Consider the following 149-residue polypeptide: Large ribosomal subunit protein uL15 (149 aa).

Residues 1-53 (MRLHTLQPAPGAKSTRKRVGRGTSSGHGKTSGFGHKGQKARSGRVGKRGFEGG) are disordered. Over residues 23 to 35 (TSSGHGKTSGFGH) the composition is skewed to gly residues. A compositionally biased stretch (basic residues) spans 36 to 47 (KGQKARSGRVGK).

The protein belongs to the universal ribosomal protein uL15 family. As to quaternary structure, part of the 50S ribosomal subunit.

Binds to the 23S rRNA. This chain is Large ribosomal subunit protein uL15, found in Coprothermobacter proteolyticus (strain ATCC 35245 / DSM 5265 / OCM 4 / BT).